The following is a 339-amino-acid chain: Ketol-acid reductoisomerase (NADP(+)) (339 aa).

The 182-residue stretch at 1–182 (MRVYYDRDAD…GGGRAGIIET (182 aa)) folds into the KARI N-terminal Rossmann domain. Residues 24–27 (YGSQ), arginine 48, serine 51, threonine 53, and 83–86 (DELQ) contribute to the NADP(+) site. Residue histidine 108 is part of the active site. Position 134 (glycine 134) interacts with NADP(+). The 146-residue stretch at 183–328 (TFKEECETDL…AELRAMMPWI (146 aa)) folds into the KARI C-terminal knotted domain. Positions 191, 195, 227, and 231 each coordinate Mg(2+). Serine 252 provides a ligand contact to substrate.

The protein belongs to the ketol-acid reductoisomerase family. Requires Mg(2+) as cofactor.

It catalyses the reaction (2R)-2,3-dihydroxy-3-methylbutanoate + NADP(+) = (2S)-2-acetolactate + NADPH + H(+). The catalysed reaction is (2R,3R)-2,3-dihydroxy-3-methylpentanoate + NADP(+) = (S)-2-ethyl-2-hydroxy-3-oxobutanoate + NADPH + H(+). Its pathway is amino-acid biosynthesis; L-isoleucine biosynthesis; L-isoleucine from 2-oxobutanoate: step 2/4. The protein operates within amino-acid biosynthesis; L-valine biosynthesis; L-valine from pyruvate: step 2/4. In terms of biological role, involved in the biosynthesis of branched-chain amino acids (BCAA). Catalyzes an alkyl-migration followed by a ketol-acid reduction of (S)-2-acetolactate (S2AL) to yield (R)-2,3-dihydroxy-isovalerate. In the isomerase reaction, S2AL is rearranged via a Mg-dependent methyl migration to produce 3-hydroxy-3-methyl-2-ketobutyrate (HMKB). In the reductase reaction, this 2-ketoacid undergoes a metal-dependent reduction by NADPH to yield (R)-2,3-dihydroxy-isovalerate. The protein is Ketol-acid reductoisomerase (NADP(+)) of Beijerinckia indica subsp. indica (strain ATCC 9039 / DSM 1715 / NCIMB 8712).